The primary structure comprises 363 residues: Uroporphyrinogen decarboxylase (363 aa).

Substrate is bound by residues 36 to 40 (RQAGR), aspartate 85, tyrosine 160, serine 215, and histidine 339.

Belongs to the uroporphyrinogen decarboxylase family. Homodimer.

The protein resides in the cytoplasm. It catalyses the reaction uroporphyrinogen III + 4 H(+) = coproporphyrinogen III + 4 CO2. The protein operates within porphyrin-containing compound metabolism; protoporphyrin-IX biosynthesis; coproporphyrinogen-III from 5-aminolevulinate: step 4/4. Functionally, catalyzes the decarboxylation of four acetate groups of uroporphyrinogen-III to yield coproporphyrinogen-III. This is Uroporphyrinogen decarboxylase from Saccharopolyspora erythraea (strain ATCC 11635 / DSM 40517 / JCM 4748 / NBRC 13426 / NCIMB 8594 / NRRL 2338).